The following is a 504-amino-acid chain: tRNA (uracil-5-)-methyltransferase homolog B (504 aa).

Residues 1–16 (MAGLKRRVPLHSLRYF) constitute a mitochondrion transit peptide. Residues glutamine 323, glutamate 373, and asparagine 423 each contribute to the S-adenosyl-L-methionine site. Catalysis depends on cysteine 451, which acts as the Nucleophile. The active-site Proton acceptor is the glutamate 497.

This sequence belongs to the class I-like SAM-binding methyltransferase superfamily. RNA M5U methyltransferase family.

It is found in the mitochondrion. Its subcellular location is the mitochondrion matrix. It catalyses the reaction uridine(54) in tRNA + S-adenosyl-L-methionine = 5-methyluridine(54) in tRNA + S-adenosyl-L-homocysteine + H(+). The enzyme catalyses a uridine in 12S rRNA + S-adenosyl-L-methionine = a 5-methyluridine in 12S rRNA + S-adenosyl-L-homocysteine + H(+). Functionally, mitochondrial S-adenosyl-L-methionine-dependent methyltransferase that catalyzes the formation of 5-methyl-uridine in tRNAs and 12S rRNA. Catalyzes the methylation of uridine at position 54 (m5U54) in all tRNAs. Specifically methylates the uridine in position 429 of 12S rRNA (m5U429). Does not affect RNA stability or mitochondrial translation. This is tRNA (uracil-5-)-methyltransferase homolog B from Homo sapiens (Human).